Reading from the N-terminus, the 185-residue chain is Ribosome-recycling factor (185 aa).

Belongs to the RRF family.

It is found in the cytoplasm. Responsible for the release of ribosomes from messenger RNA at the termination of protein biosynthesis. May increase the efficiency of translation by recycling ribosomes from one round of translation to another. The chain is Ribosome-recycling factor from Saccharophagus degradans (strain 2-40 / ATCC 43961 / DSM 17024).